The following is a 4171-amino-acid chain: Cytoplasmic dynein 2 heavy chain 1 (4171 aa).

The segment at 1-1598 (MSSDSKDQRK…VLRQVSSEFE (1598 aa)) is stem. Residue 115–122 (GKELTEGN) participates in ATP binding. 5 coiled-coil regions span residues 164–203 (ANDY…CDEL), 629–693 (KQLE…KEEE), 829–861 (DLEE…AERL), 927–1048 (EIAE…KEKR), and 1354–1383 (SRQS…LEQK). 4 AAA regions span residues 1599 to 1823 (YTYE…VLGG), 1883 to 2100 (EPLG…VRSH), 2184 to 2432 (VTKE…WVVS), and 2527 to 2767 (RFAF…PIKY). Residues 1637–1644 (GPAGTGKT), 1921–1928 (GAAGSGKS), 2226–2233 (GTTGCGKQ), and 2565–2572 (GRPGFGRR) each bind ATP. The segment at 2776-3064 (QLLGYKRLTL…VDLDREQDTI (289 aa)) is stalk. Coiled coils occupy residues 2790-2877 (ERLK…KEVQ), 2999-3059 (EKIA…DLDR), and 3308-3336 (ELEE…LLLQ). 2 AAA regions span residues 3140–3367 (ASLE…IITK) and 3575–3784 (LMDF…FVEQ).

The protein belongs to the dynein heavy chain family. In terms of assembly, the cytoplasmic dynein complex 2 is probably composed by a heavy chain che-3 homodimer and a number of light intermediate chains.

The protein localises to the cell projection. It is found in the cilium membrane. The protein resides in the cytoplasm. It localises to the cytoskeleton. Its function is as follows. Functions as a motor for intraflagellar retrograde transport in chemosensory neurons. Functions in cilia biogenesis. The sequence is that of Cytoplasmic dynein 2 heavy chain 1 from Caenorhabditis elegans.